We begin with the raw amino-acid sequence, 376 residues long: MSFAPLQNDTFLRACRRQATDYTPLWLMRQAGRYLPEYKATRARAGSFMGLATNVDYATEVTLQPLERFPLDAAILFSDILTVPDAMGLGLSFAEGEGPRFARVVRDEAAVAELAVPDMEKLRYVFDAVTSIRRALDGRVPLIGFSGSPWTLACYMVEGSGSDDYRLVKTLMYSRPDLMHRILAINADAVAAYLNAQIDAGAQAVMVFDSWGGVLADGAFQEFSLAYTTRVLAQLKRTGVDGTDVPRIVFTKGGALWLEDMKGLDCEVLGLDWTANLARARALVGGAVGGPGKALQGNIDPNVLFAPPEAIAAQARAVLDRFGAPHTDRGTTGPTHIFNLGHGISQHTPPEHVAALVEAVHGHSRAMRAAAGTGRA.

Substrate-binding positions include 29–33 (RQAGR), aspartate 79, tyrosine 155, serine 210, and histidine 342.

It belongs to the uroporphyrinogen decarboxylase family. In terms of assembly, homodimer.

It localises to the cytoplasm. It catalyses the reaction uroporphyrinogen III + 4 H(+) = coproporphyrinogen III + 4 CO2. It functions in the pathway porphyrin-containing compound metabolism; protoporphyrin-IX biosynthesis; coproporphyrinogen-III from 5-aminolevulinate: step 4/4. Its function is as follows. Catalyzes the decarboxylation of four acetate groups of uroporphyrinogen-III to yield coproporphyrinogen-III. The sequence is that of Uroporphyrinogen decarboxylase from Paracidovorax citrulli (strain AAC00-1) (Acidovorax citrulli).